The following is a 449-amino-acid chain: Bifunctional protein GlmU (449 aa).

The segment at 1-226 (MVAVAILAAG…FQEISGINDR (226 aa)) is pyrophosphorylase. UDP-N-acetyl-alpha-D-glucosamine-binding positions include 7-10 (LAAG), lysine 21, glutamine 73, and 78-79 (GT). Aspartate 103 is a Mg(2+) binding site. The UDP-N-acetyl-alpha-D-glucosamine site is built by glycine 140, glutamate 155, asparagine 170, and asparagine 224. Residue asparagine 224 participates in Mg(2+) binding. Positions 227–247 (FQLSAAYEILQDRIKEKWMKA) are linker. The tract at residues 248–449 (GVMIHQPDTV…KEIKGWRLQS (202 aa)) is N-acetyltransferase. 2 residues coordinate UDP-N-acetyl-alpha-D-glucosamine: arginine 329 and lysine 347. Histidine 359 (proton acceptor) is an active-site residue. Residues tyrosine 362 and asparagine 373 each contribute to the UDP-N-acetyl-alpha-D-glucosamine site. Residues alanine 376, 382-383 (NY), alanine 419, and arginine 436 contribute to the acetyl-CoA site.

In the N-terminal section; belongs to the N-acetylglucosamine-1-phosphate uridyltransferase family. The protein in the C-terminal section; belongs to the transferase hexapeptide repeat family. In terms of assembly, homotrimer. Mg(2+) is required as a cofactor.

The protein resides in the cytoplasm. The catalysed reaction is alpha-D-glucosamine 1-phosphate + acetyl-CoA = N-acetyl-alpha-D-glucosamine 1-phosphate + CoA + H(+). It catalyses the reaction N-acetyl-alpha-D-glucosamine 1-phosphate + UTP + H(+) = UDP-N-acetyl-alpha-D-glucosamine + diphosphate. It participates in nucleotide-sugar biosynthesis; UDP-N-acetyl-alpha-D-glucosamine biosynthesis; N-acetyl-alpha-D-glucosamine 1-phosphate from alpha-D-glucosamine 6-phosphate (route II): step 2/2. It functions in the pathway nucleotide-sugar biosynthesis; UDP-N-acetyl-alpha-D-glucosamine biosynthesis; UDP-N-acetyl-alpha-D-glucosamine from N-acetyl-alpha-D-glucosamine 1-phosphate: step 1/1. Its pathway is bacterial outer membrane biogenesis; LPS lipid A biosynthesis. Functionally, catalyzes the last two sequential reactions in the de novo biosynthetic pathway for UDP-N-acetylglucosamine (UDP-GlcNAc). The C-terminal domain catalyzes the transfer of acetyl group from acetyl coenzyme A to glucosamine-1-phosphate (GlcN-1-P) to produce N-acetylglucosamine-1-phosphate (GlcNAc-1-P), which is converted into UDP-GlcNAc by the transfer of uridine 5-monophosphate (from uridine 5-triphosphate), a reaction catalyzed by the N-terminal domain. The chain is Bifunctional protein GlmU from Picosynechococcus sp. (strain ATCC 27264 / PCC 7002 / PR-6) (Agmenellum quadruplicatum).